We begin with the raw amino-acid sequence, 367 residues long: MSFNHIKKVIVGMSGGVDSSVSAWLLQQQGYKVEGLFMKNWEDDDSTEQCASASDLSDTHSVCDNLGIYLHTINFSKEYWENVFQVFLQEYSVGRTPNPDILCNKEIKFKYFLEFALQDLDADLIATGHYVRRVDMNKKTYLIRGVDRNKDQSYFLYTLSYKQLKQCLFPVGTLNKFQVRNIAKKLNLITANKKDSTGICFIGKRKFKDFISKYIPIRPGVIIDINGNTIGAHQGVSFYTLGQRKGLKIGGVKQGNGQPWYVIDKDTSNNTLIAAQGRNHPRLMSIAFITEQTQWVKRDALTSPLHCTVKTRYRHPDIQCQIYPLLNNNLKVILKIPVLAITPGQSAVFYLKERCLGGGIITKIYHC.

Residues Gly-12–Ser-19 and Met-38 each bind ATP. Positions Asn-98 to Asp-100 are interaction with target base in tRNA. The active-site Nucleophile is Cys-103. An intrachain disulfide couples Cys-103 to Cys-200. Gly-128 is an ATP binding site. Residues Lys-150 to Gln-152 are interaction with tRNA. The active-site Cysteine persulfide intermediate is Cys-200. The tract at residues Arg-312–Tyr-313 is interaction with tRNA.

It belongs to the MnmA/TRMU family. Interacts with TusE.

The protein resides in the cytoplasm. The enzyme catalyses S-sulfanyl-L-cysteinyl-[protein] + uridine(34) in tRNA + AH2 + ATP = 2-thiouridine(34) in tRNA + L-cysteinyl-[protein] + A + AMP + diphosphate + H(+). Functionally, catalyzes the 2-thiolation of uridine at the wobble position (U34) of tRNA(Lys), tRNA(Glu) and tRNA(Gln), leading to the formation of s(2)U34, the first step of tRNA-mnm(5)s(2)U34 synthesis. Sulfur is provided by IscS, via a sulfur-relay system. Binds ATP and its substrate tRNAs. The protein is tRNA-specific 2-thiouridylase MnmA of Blochmanniella pennsylvanica (strain BPEN).